Consider the following 216-residue polypeptide: Cytidylate kinase (216 aa).

7 to 15 serves as a coordination point for ATP; the sequence is GPSGTGKST.

Belongs to the cytidylate kinase family. Type 1 subfamily.

Its subcellular location is the cytoplasm. It carries out the reaction CMP + ATP = CDP + ADP. It catalyses the reaction dCMP + ATP = dCDP + ADP. This Chlamydia felis (strain Fe/C-56) (Chlamydophila felis) protein is Cytidylate kinase.